We begin with the raw amino-acid sequence, 214 residues long: Cytochrome b (214 aa).

Transmembrane regions (helical) follow at residues 31-51 (FGSMLLACLMIQIITGFFLAI), 75-96 (WIMQNTHAISASLFFICIYIHI), 111-131 (WLSGTTLLIILMATAFFGYVL), and 176-196 (FFALHFILPFIIISMSSIHIL). Heme b contacts are provided by His81 and His95. Heme b contacts are provided by His180 and His194. A ubiquinone is bound at residue His199.

The protein belongs to the cytochrome b family. The cytochrome bc1 complex contains 3 respiratory subunits (MT-CYB, CYC1 and UQCRFS1), 2 core proteins (UQCRC1 and UQCRC2) and probably 6 low-molecular weight proteins. Heme b is required as a cofactor.

It is found in the mitochondrion inner membrane. Functionally, component of the ubiquinol-cytochrome c reductase complex (complex III or cytochrome b-c1 complex) that is part of the mitochondrial respiratory chain. The b-c1 complex mediates electron transfer from ubiquinol to cytochrome c. Contributes to the generation of a proton gradient across the mitochondrial membrane that is then used for ATP synthesis. In Bothrops atrox (Barba amarilla), this protein is Cytochrome b (MT-CYB).